An 89-amino-acid chain; its full sequence is Phasin PhaP (89 aa).

Helix stretches follow at residues 3 to 26 (TQFF…TWME) and 39 to 83 (DTFE…ALRQ).

As to quaternary structure, homotetramer.

The protein localises to the cellular thylakoid membrane. It is found in the cytoplasm. It participates in biopolymer metabolism; poly-(R)-3-hydroxybutanoate biosynthesis. A phasin, it attaches to the polyhydroxybutyrate (PHB) granule surface regulating the number and size of PHB granules within a cell. It probably also acts as a regulator affecting the biosynthetic activity of PHB synthase in vivo. The sequence is that of Phasin PhaP from Synechocystis sp. (strain ATCC 27184 / PCC 6803 / Kazusa).